Reading from the N-terminus, the 313-residue chain is Homoserine O-succinyltransferase (313 aa).

C142 functions as the Acyl-thioester intermediate in the catalytic mechanism. Residues K163 and S192 each coordinate substrate. H235 serves as the catalytic Proton acceptor. E237 is a catalytic residue. R249 provides a ligand contact to substrate.

Belongs to the MetA family.

Its subcellular location is the cytoplasm. The enzyme catalyses L-homoserine + succinyl-CoA = O-succinyl-L-homoserine + CoA. It participates in amino-acid biosynthesis; L-methionine biosynthesis via de novo pathway; O-succinyl-L-homoserine from L-homoserine: step 1/1. Its function is as follows. Transfers a succinyl group from succinyl-CoA to L-homoserine, forming succinyl-L-homoserine. In Shewanella baltica (strain OS223), this protein is Homoserine O-succinyltransferase.